The primary structure comprises 341 residues: C2 calcium-dependent domain-containing protein 4D (341 aa).

The segment covering 56–71 (RLRDPRGAEGRVDRNP) has biased composition (basic and acidic residues). Disordered regions lie at residues 56-75 (RLRDPRGAEGRVDRNPGGRN) and 134-176 (CRAP…PYAP). The span at 139–149 (SDTASSPDSSP) shows a compositional bias: low complexity. The C2 domain maps to 205 to 331 (RGGQLRLSTE…PPLAGGLGPG (127 aa)).

The polypeptide is C2 calcium-dependent domain-containing protein 4D (C2cd4d) (Mus musculus (Mouse)).